We begin with the raw amino-acid sequence, 808 residues long: MGLFNFLKLVSPRHRIYHKASKIANEVEGHKNYYRNLTDVQLLEESNKLVDLVTKQNYTILDVAVAALALIREVVYRETGEFAYRVQIIGAYIVLIGDFAEMMTGEGKTLTIVLAAYVSALEKRGVHVVTVNEYLAQRDATNATKILKRVGMTVGCNFANLAPHLKQAAFACDVTYTTNSELGFDYLRDNMVHRFEDKKIRELHFAIVDEGDSVLIDEARTPLIISGPAKNEFAAYVAVDRFVKKLKEDEYKIDPESRAPALTELGIKHAEKNFKTDNLFALENSDLFHKIINALTAVKVFEQGKEYIVRDGKVLIVDHFTGRILEGRSYSNGLHQAVQAKEMVEIEPENVIVATITYQSFFRLYNRLSAVSGTAFTESEEFLKIYNMVVVPVPTNRPNIRKDRADSVFGTPNIKWLAVVKEVKRIHETGRPILIGTANIDDSELLHNYLQEANIPHEVLNAKNHSREAEIVAKAGQKGAVTISTNMAGRGTDIRLGEGVAEMGGLYVLGTERNESRRIDNQLRGRAGRQGDRGETKFFISLGDALFKRFAHDRIERAITKLGNDTFDSSFFSKMLSRTQKRVEAINFDTRKNLIDYDHVLASQRELIYKQRDKFLLATDLSDMIDKMLEKFVEQFCDQYRNPKNQNLVNHIALSEALNLELNMHGVISPKLFENMTFDATVHKTHSLIGEKITNKVKVLTPPIALIRFREIMITAMDKHWIEHLDNVFKLREGVTLRSMEQTSPLNVYIRETDILFQTMLQKIARDVIIQIANLATPEEFDEELMKANALKKLQALREAHEKSNEGQ.

ATP-binding positions include glutamine 87, 105 to 109 (GEGKT), and aspartate 493.

It belongs to the SecA family. In terms of assembly, monomer and homodimer. Part of the essential Sec protein translocation apparatus which comprises SecA, SecYEG and auxiliary proteins SecDF. Other proteins may also be involved.

The protein resides in the cell membrane. Its subcellular location is the cytoplasm. It carries out the reaction ATP + H2O + cellular proteinSide 1 = ADP + phosphate + cellular proteinSide 2.. Functionally, part of the Sec protein translocase complex. Interacts with the SecYEG preprotein conducting channel. Has a central role in coupling the hydrolysis of ATP to the transfer of proteins into and across the cell membrane, serving as an ATP-driven molecular motor driving the stepwise translocation of polypeptide chains across the membrane. The sequence is that of Protein translocase subunit SecA from Mycoplasma pneumoniae (strain ATCC 29342 / M129 / Subtype 1) (Mycoplasmoides pneumoniae).